The chain runs to 300 residues: tRNA dimethylallyltransferase (300 aa).

11–18 (GPTAVGKS) serves as a coordination point for ATP. Residue 13–18 (TAVGKS) participates in substrate binding. An interaction with substrate tRNA region spans residues 35–38 (DSIQ).

It belongs to the IPP transferase family. Monomer. Mg(2+) serves as cofactor.

It catalyses the reaction adenosine(37) in tRNA + dimethylallyl diphosphate = N(6)-dimethylallyladenosine(37) in tRNA + diphosphate. Its function is as follows. Catalyzes the transfer of a dimethylallyl group onto the adenine at position 37 in tRNAs that read codons beginning with uridine, leading to the formation of N6-(dimethylallyl)adenosine (i(6)A). The sequence is that of tRNA dimethylallyltransferase from Borrelia duttonii (strain Ly).